The primary structure comprises 572 residues: Proline--tRNA ligase (572 aa).

This sequence belongs to the class-II aminoacyl-tRNA synthetase family. ProS type 1 subfamily. As to quaternary structure, homodimer.

It is found in the cytoplasm. It carries out the reaction tRNA(Pro) + L-proline + ATP = L-prolyl-tRNA(Pro) + AMP + diphosphate. Catalyzes the attachment of proline to tRNA(Pro) in a two-step reaction: proline is first activated by ATP to form Pro-AMP and then transferred to the acceptor end of tRNA(Pro). As ProRS can inadvertently accommodate and process non-cognate amino acids such as alanine and cysteine, to avoid such errors it has two additional distinct editing activities against alanine. One activity is designated as 'pretransfer' editing and involves the tRNA(Pro)-independent hydrolysis of activated Ala-AMP. The other activity is designated 'posttransfer' editing and involves deacylation of mischarged Ala-tRNA(Pro). The misacylated Cys-tRNA(Pro) is not edited by ProRS. This chain is Proline--tRNA ligase, found in Pectobacterium carotovorum subsp. carotovorum (strain PC1).